We begin with the raw amino-acid sequence, 456 residues long: Argininosuccinate lyase (456 aa).

The protein belongs to the lyase 1 family. Argininosuccinate lyase subfamily.

The protein localises to the cytoplasm. The enzyme catalyses 2-(N(omega)-L-arginino)succinate = fumarate + L-arginine. It participates in amino-acid biosynthesis; L-arginine biosynthesis; L-arginine from L-ornithine and carbamoyl phosphate: step 3/3. This Listeria monocytogenes serotype 4a (strain HCC23) protein is Argininosuccinate lyase.